We begin with the raw amino-acid sequence, 212 residues long: Peroxiredoxin-like 2A (212 aa).

The segment at 3 to 101 (MWSLGLGAVG…DELGVPLYAV (99 aa)) is thioredoxin fold. A non-standard amino acid (selenocysteine) is located at residue selenocysteine 74. Cysteine 77 acts as the Redox-active in catalysis.

The protein belongs to the peroxiredoxin-like PRXL2 family. PRXL2A subfamily. In terms of tissue distribution, expressed in kidney marrow.

The protein localises to the cytoplasm. Involved in redox regulation of the cell. Acts as an antioxidant. The chain is Peroxiredoxin-like 2A (prxl2a) from Danio rerio (Zebrafish).